Consider the following 123-residue polypeptide: UPF0102 protein PFL_5073 (123 aa).

This sequence belongs to the UPF0102 family.

In Pseudomonas fluorescens (strain ATCC BAA-477 / NRRL B-23932 / Pf-5), this protein is UPF0102 protein PFL_5073.